The chain runs to 123 residues: Transmembrane protein 254 (123 aa).

Transmembrane regions (helical) follow at residues 15–35, 63–83, and 95–115; these read LFWFTVIAVSFSYYTWVVFWP, NGYWLAWLVHVGESLYALVLC, and LLWFLQTFLFGVASLSILFAY.

It is found in the membrane. This Rattus norvegicus (Rat) protein is Transmembrane protein 254 (Tmem254).